The following is a 619-amino-acid chain: MSVRPQNDFDGKAFAAQLSTAPGVYRMYAGDDTLLYVGKAGALRKRVGSYFNGTPKNARLTSMLSQVARMDVTVTRSEAEALLLENQLIKSLSPRYNVSLRDDKSYPYVLLTREQWPRIALHRGPRAVQGRYFGPYTGVTGVRETLSLMHKLFKLRSCEDSVFRNRSRPCLQYQIGRCSGPCVDLVAAPDYAESVRRATMFLEGKSDQLGEEIMHSMQQASEALEFERAARLRDLLSSLRSMQNRQYVDGRAADLDVLACATQSSQACVLLLSFRDGRNLGTRSFFPKTNGEDSADEILGAFVSQYYAEHSPPREILLDREIPEAELIEAALSTAAEHKVALKWNVRGERAGYLLLATRNAQLTLVTELTSQSAQHARSEALRELLGLAEPVKRVECFDISHTMGEATVASCVVFDASGPVRGQYRRFNISGITPGDDYAAMRQAIERRFRRAVEENGVIPDVLLIDGGAGQLAQAQAALADLGVENVLLVGVAKGEERRAGHEALIMADGRELRPGAASPALQFIQQVRDEAHRFAITGHRGRRQKARMTSKLEDIPGIGPRRRASLLKHFGGLVGLKAAGEAEIARVEGVNAALAARIYANLHGLALPDAAGEASPQ.

One can recognise a GIY-YIG domain in the interval 20–98 (TAPGVYRMYA…IKSLSPRYNV (79 aa)). The 36-residue stretch at 207-242 (DQLGEEIMHSMQQASEALEFERAARLRDLLSSLRSM) folds into the UVR domain.

This sequence belongs to the UvrC family. In terms of assembly, interacts with UvrB in an incision complex.

The protein resides in the cytoplasm. The UvrABC repair system catalyzes the recognition and processing of DNA lesions. UvrC both incises the 5' and 3' sides of the lesion. The N-terminal half is responsible for the 3' incision and the C-terminal half is responsible for the 5' incision. The protein is UvrABC system protein C of Xanthomonas axonopodis pv. citri (strain 306).